We begin with the raw amino-acid sequence, 952 residues long: Glycine dehydrogenase (decarboxylating) (952 aa).

K703 is subject to N6-(pyridoxal phosphate)lysine.

Belongs to the GcvP family. In terms of assembly, the glycine cleavage system is composed of four proteins: P, T, L and H. Pyridoxal 5'-phosphate serves as cofactor.

The catalysed reaction is N(6)-[(R)-lipoyl]-L-lysyl-[glycine-cleavage complex H protein] + glycine + H(+) = N(6)-[(R)-S(8)-aminomethyldihydrolipoyl]-L-lysyl-[glycine-cleavage complex H protein] + CO2. Its function is as follows. The glycine cleavage system catalyzes the degradation of glycine. The P protein binds the alpha-amino group of glycine through its pyridoxal phosphate cofactor; CO(2) is released and the remaining methylamine moiety is then transferred to the lipoamide cofactor of the H protein. The protein is Glycine dehydrogenase (decarboxylating) of Mycolicibacterium gilvum (strain PYR-GCK) (Mycobacterium gilvum (strain PYR-GCK)).